A 389-amino-acid chain; its full sequence is Lipid-A-disaccharide synthase (389 aa).

It belongs to the LpxB family.

It carries out the reaction a lipid X + a UDP-2-N,3-O-bis[(3R)-3-hydroxyacyl]-alpha-D-glucosamine = a lipid A disaccharide + UDP + H(+). The protein operates within bacterial outer membrane biogenesis; LPS lipid A biosynthesis. Functionally, condensation of UDP-2,3-diacylglucosamine and 2,3-diacylglucosamine-1-phosphate to form lipid A disaccharide, a precursor of lipid A, a phosphorylated glycolipid that anchors the lipopolysaccharide to the outer membrane of the cell. This is Lipid-A-disaccharide synthase from Burkholderia multivorans (strain ATCC 17616 / 249).